Consider the following 67-residue polypeptide: Conotoxin Cl14c (67 aa).

An N-terminal signal peptide occupies residues 1-20; it reads MNVTVMFLVLLLLTMPLTDG. The propeptide occupies 21 to 48; that stretch reads FNIRATNGGELFGPVQRDAGNVLDHGFQ.

It belongs to the conotoxin L superfamily. Contains 2 disulfide bonds. As to expression, expressed by the venom duct.

The protein resides in the secreted. This is Conotoxin Cl14c from Californiconus californicus (California cone).